The primary structure comprises 119 residues: Protein ELF4-LIKE 2 (119 aa).

The disordered stretch occupies residues 91-119 (SVDASSEGESTGTLKSDGKANNQKRFRSG). Positions 93–111 (DASSEGESTGTLKSDGKAN) are enriched in polar residues.

This sequence belongs to the EARLY FLOWERING 4 family. Homodimer.

It is found in the nucleus. Its function is as follows. Component of the central CCA1/LHY-TOC1 feedback loop in the circadian clock that promotes clock accuracy and is required for sustained rhythms in the absence of daily light/dark cycles. The protein is Protein ELF4-LIKE 2 (EFL2) of Arabidopsis thaliana (Mouse-ear cress).